Reading from the N-terminus, the 301-residue chain is Tetratricopeptide repeat domain-containing protein PYG7, chloroplastic (301 aa).

Residues 1 to 61 constitute a chloroplast transit peptide; it reads MFESNMVLQT…FHDYVFAEIS (61 aa). A run of 2 helical transmembrane segments spans residues 82 to 102 and 121 to 141; these read TFLLGQSLLMVSAHPQLAAAA and IQLSYLLLLLGLLGVGTFYVI. TPR repeat units follow at residues 168–201, 206–239, and 240–273; these read ATELFELGAVMLRRKFYPAANKFLQQAIQKWDGD, AQVYNALGVSYVREDKLDKGIAQFEMAVKLQPGY, and VTAWNNLGDAYEKKKELPLALNAFEEVLLFDPNN.

Interacts with PSA3.

The protein localises to the plastid. It localises to the chloroplast thylakoid membrane. Nuclear genome-encoded factor required for the accumulation of photosystem I (PSI). Functions as a PSI biogenesis factor. Cooperates with PSA3 to promote the stable assembly of PSI in the thylakoid membrane. May target primarily the PsaC subunit. The polypeptide is Tetratricopeptide repeat domain-containing protein PYG7, chloroplastic (Arabidopsis thaliana (Mouse-ear cress)).